Consider the following 956-residue polypeptide: Translation initiation factor IF-2 (956 aa).

The tract at residues 50 to 351 (FPADSGGAAN…APSIGGVQVP (302 aa)) is disordered. Over residues 64 to 95 (APKPARAPKPAPKAAPAPPVEEAPAEPAPPAA) the composition is skewed to pro residues. Low complexity-rich tracts occupy residues 96–107 (PEVVAAPEAPVA) and 121–136 (PEAP…ARPA). The segment covering 146-155 (AAEKPADTRT) has biased composition (basic and acidic residues). Composition is skewed to gly residues over residues 171–192 (RPGG…GGPR) and 206–234 (RPGG…GQGG). Positions 235–254 (SRPSPGMMPGRSAVGRPGAP) are enriched in low complexity. Gly residues predominate over residues 255–320 (ARGGSGGPGG…GTQGAFGRAG (66 aa)). The span at 324–333 (VRARKSRRAK) shows a compositional bias: basic residues. The 172-residue stretch at 448–619 (ARPPVVTVMG…AVLLTADAAL (172 aa)) folds into the tr-type G domain. Residues 457-464 (GHVDHGKT) are G1. 457-464 (GHVDHGKT) serves as a coordination point for GTP. Residues 482–486 (GITQH) are G2. The interval 507-510 (DTPG) is G3. Residues 507-511 (DTPGH) and 561-564 (NKVD) contribute to the GTP site. A G4 region spans residues 561–564 (NKVD). Residues 597-599 (SAK) are G5.

This sequence belongs to the TRAFAC class translation factor GTPase superfamily. Classic translation factor GTPase family. IF-2 subfamily.

The protein resides in the cytoplasm. One of the essential components for the initiation of protein synthesis. Protects formylmethionyl-tRNA from spontaneous hydrolysis and promotes its binding to the 30S ribosomal subunits. Also involved in the hydrolysis of GTP during the formation of the 70S ribosomal complex. This chain is Translation initiation factor IF-2, found in Beutenbergia cavernae (strain ATCC BAA-8 / DSM 12333 / CCUG 43141 / JCM 11478 / NBRC 16432 / NCIMB 13614 / HKI 0122).